The primary structure comprises 171 residues: 3-hydroxydecanoyl-[acyl-carrier-protein] dehydratase (171 aa).

H70 is an active-site residue.

This sequence belongs to the thioester dehydratase family. FabA subfamily. Homodimer.

The protein localises to the cytoplasm. The catalysed reaction is a (3R)-hydroxyacyl-[ACP] = a (2E)-enoyl-[ACP] + H2O. It carries out the reaction (3R)-hydroxydecanoyl-[ACP] = (2E)-decenoyl-[ACP] + H2O. The enzyme catalyses (2E)-decenoyl-[ACP] = (3Z)-decenoyl-[ACP]. It functions in the pathway lipid metabolism; fatty acid biosynthesis. Necessary for the introduction of cis unsaturation into fatty acids. Catalyzes the dehydration of (3R)-3-hydroxydecanoyl-ACP to E-(2)-decenoyl-ACP and then its isomerization to Z-(3)-decenoyl-ACP. Can catalyze the dehydratase reaction for beta-hydroxyacyl-ACPs with saturated chain lengths up to 16:0, being most active on intermediate chain length. In Shewanella loihica (strain ATCC BAA-1088 / PV-4), this protein is 3-hydroxydecanoyl-[acyl-carrier-protein] dehydratase.